Here is a 396-residue protein sequence, read N- to C-terminus: MAKEKFERTKPHVNVGTIGHVDHGKTTLTAAIATVLAAKFGGAAKKYDEIDAAPEEKARGITINTAHVEYETANRHYAHVDCPGHADYVKNMITGAAQMDGAILVCSAADGPMPQTREHILLARQVGVPYIIVFLNKCDMVDDAELLELVEMEVRELLSKYEFPGDDTPIIKGSAKLALEGDKGELGEVAIMNLADALDTYIPTPERAVDGTFLMPVEDVFSISGRGTVVTGRIERGVIKVGEEIEIVGIRPTVKTTCTGVEMFRKLLDQGQAGDNVGLLLRGTKREDVERGQVLCKPGSIKPHTHFTGEVYILSKDEGGRHTPFFNNYRPQFYFRTTDVTGSIELPADKEMVMPGDNVSITVKLIAPIAMEEGLRFAIREGGRTVGAGVVAKILD.

Residues 10–206 (KPHVNVGTIG…ALDTYIPTPE (197 aa)) enclose the tr-type G domain. Residues 19 to 26 (GHVDHGKT) form a G1 region. 19-26 (GHVDHGKT) is a binding site for GTP. Thr26 contributes to the Mg(2+) binding site. The G2 stretch occupies residues 60-64 (GITIN). A G3 region spans residues 81–84 (DCPG). Residues 81-85 (DCPGH) and 136-139 (NKCD) contribute to the GTP site. The interval 136–139 (NKCD) is G4. Residues 174 to 176 (SAK) are G5.

It belongs to the TRAFAC class translation factor GTPase superfamily. Classic translation factor GTPase family. EF-Tu/EF-1A subfamily. Monomer.

The protein localises to the cytoplasm. The catalysed reaction is GTP + H2O = GDP + phosphate + H(+). Its function is as follows. GTP hydrolase that promotes the GTP-dependent binding of aminoacyl-tRNA to the A-site of ribosomes during protein biosynthesis. This chain is Elongation factor Tu, found in Cupriavidus pinatubonensis (strain JMP 134 / LMG 1197) (Cupriavidus necator (strain JMP 134)).